We begin with the raw amino-acid sequence, 186 residues long: Inosine/xanthosine triphosphatase (186 aa).

Glutamine 75 lines the Mg(2+) pocket.

It belongs to the YjjX NTPase family. Homodimer. Requires Mg(2+) as cofactor. The cofactor is Mn(2+).

The catalysed reaction is XTP + H2O = XDP + phosphate + H(+). It carries out the reaction ITP + H2O = IDP + phosphate + H(+). Its function is as follows. Phosphatase that hydrolyzes non-canonical purine nucleotides such as XTP and ITP to their respective diphosphate derivatives. Probably excludes non-canonical purines from DNA/RNA precursor pool, thus preventing their incorporation into DNA/RNA and avoiding chromosomal lesions. This chain is Inosine/xanthosine triphosphatase, found in Shewanella baltica (strain OS185).